The following is a 50-amino-acid chain: Insulin-1 (50 aa).

Disulfide bonds link cysteine 7/cysteine 36, cysteine 19/cysteine 49, and cysteine 35/cysteine 40.

This sequence belongs to the insulin family. In terms of assembly, heterodimer of a B chain and an A chain linked by two disulfide bonds.

The protein resides in the secreted. In terms of biological role, insulin decreases blood glucose concentration. It increases cell permeability to monosaccharides, amino acids and fatty acids. It accelerates glycolysis, the pentose phosphate cycle, and glycogen synthesis in liver. The sequence is that of Insulin-1 from Katsuwonus pelamis (Skipjack tuna).